The chain runs to 236 residues: Flagellar L-ring protein (236 aa).

Residues M1–G16 form the signal peptide. C17 carries N-palmitoyl cysteine lipidation. C17 is lipidated: S-diacylglycerol cysteine. The disordered stretch occupies residues E96 to E143. The span at N105–F122 shows a compositional bias: polar residues.

Belongs to the FlgH family. In terms of assembly, the basal body constitutes a major portion of the flagellar organelle and consists of four rings (L,P,S, and M) mounted on a central rod.

The protein resides in the cell outer membrane. The protein localises to the bacterial flagellum basal body. Its function is as follows. Assembles around the rod to form the L-ring and probably protects the motor/basal body from shearing forces during rotation. This Sinorhizobium medicae (strain WSM419) (Ensifer medicae) protein is Flagellar L-ring protein.